The sequence spans 254 residues: Protein CbbY, plasmid (254 aa).

This sequence belongs to the HAD-like hydrolase superfamily. CbbY/CbbZ/Gph/YieH family.

This Cupriavidus necator (strain ATCC 17699 / DSM 428 / KCTC 22496 / NCIMB 10442 / H16 / Stanier 337) (Ralstonia eutropha) protein is Protein CbbY, plasmid (cbbYP).